The following is a 229-amino-acid chain: DNA polymerase III subunit epsilon (229 aa).

A divalent metal cation-binding residues include Asp-10 and Glu-12. Substrate is bound by residues Asp-10, Glu-12, Glu-55, and His-60. The active-site Proton acceptor is the His-156. Asp-161 contacts a divalent metal cation. Position 161 (Asp-161) interacts with substrate.

In terms of assembly, DNA polymerase III contains a core (composed of alpha, epsilon and theta chains) that associates with a tau subunit. This core dimerizes to form the POLIII' complex. PolIII' associates with the gamma complex (composed of gamma, delta, delta', psi and chi chains) and with the beta chain to form the complete DNA polymerase III complex. It depends on Mg(2+) as a cofactor. Mn(2+) serves as cofactor.

It carries out the reaction DNA(n) + a 2'-deoxyribonucleoside 5'-triphosphate = DNA(n+1) + diphosphate. Functionally, DNA polymerase III is a complex, multichain enzyme responsible for most of the replicative synthesis in bacteria. The epsilon subunit contain the editing function and is a proofreading 3'-5' exonuclease. The polypeptide is DNA polymerase III subunit epsilon (dnaQ) (Rickettsia typhi (strain ATCC VR-144 / Wilmington)).